The chain runs to 642 residues: Threonine--tRNA ligase (642 aa).

The region spanning 1-61 is the TGS domain; it reads MPVITLPDGS…ETDAELSIIT (61 aa). A catalytic region spans residues 243–534; it reads DHRKIGKQLD…LIEEYAGRFP (292 aa). Zn(2+) is bound by residues Cys334, His385, and His511.

This sequence belongs to the class-II aminoacyl-tRNA synthetase family. Homodimer. The cofactor is Zn(2+).

The protein localises to the cytoplasm. The enzyme catalyses tRNA(Thr) + L-threonine + ATP = L-threonyl-tRNA(Thr) + AMP + diphosphate + H(+). Its function is as follows. Catalyzes the attachment of threonine to tRNA(Thr) in a two-step reaction: L-threonine is first activated by ATP to form Thr-AMP and then transferred to the acceptor end of tRNA(Thr). Also edits incorrectly charged L-seryl-tRNA(Thr). The sequence is that of Threonine--tRNA ligase from Shewanella sp. (strain ANA-3).